The primary structure comprises 55 residues: Putative virulence-regulating protein PA2146 (55 aa).

The disordered stretch occupies residues 1-55; the sequence is MAQHQGGKGNFAEDPKRASEAGKKGGQASGGNFKNDPQRASEAGKKGGQRSHGGN. 2 stretches are compositionally biased toward basic and acidic residues: residues 11–23 and 36–45; these read FAED…EAGK and DPQRASEAGK.

Belongs to the con-10 family.

Functionally, may be involved in the regulation of the production of pyocyanine, one of the major virulence factors secreted by P.aeruginosa, and other virulence factors. The chain is Putative virulence-regulating protein PA2146 from Pseudomonas aeruginosa (strain ATCC 15692 / DSM 22644 / CIP 104116 / JCM 14847 / LMG 12228 / 1C / PRS 101 / PAO1).